We begin with the raw amino-acid sequence, 98 residues long: MARSLKKNPFVVHHLVRKIDKLNKKKKKGIIKTWSRASTIIPTMIGHTIAVYKGKEHLPIYITDYMTGHKLGEFAPTLYFLRGHPTERPTKNDNRSQR.

This sequence belongs to the universal ribosomal protein uS19 family.

Its subcellular location is the plastid. It localises to the chloroplast. In terms of biological role, protein S19 forms a complex with S13 that binds strongly to the 16S ribosomal RNA. The sequence is that of Small ribosomal subunit protein uS19c from Jasminum nudiflorum (Winter jasmine).